The sequence spans 364 residues: Histidinol-phosphate aminotransferase 1 (364 aa).

N6-(pyridoxal phosphate)lysine is present on Lys211.

It belongs to the class-II pyridoxal-phosphate-dependent aminotransferase family. Histidinol-phosphate aminotransferase subfamily. In terms of assembly, homodimer. Pyridoxal 5'-phosphate serves as cofactor.

It carries out the reaction L-histidinol phosphate + 2-oxoglutarate = 3-(imidazol-4-yl)-2-oxopropyl phosphate + L-glutamate. It participates in amino-acid biosynthesis; L-histidine biosynthesis; L-histidine from 5-phospho-alpha-D-ribose 1-diphosphate: step 7/9. The polypeptide is Histidinol-phosphate aminotransferase 1 (Legionella pneumophila (strain Lens)).